We begin with the raw amino-acid sequence, 24 residues long: Acetylcholine receptor subunit alpha (24 aa).

Belongs to the ligand-gated ion channel (TC 1.A.9) family. Acetylcholine receptor (TC 1.A.9.1) subfamily. Alpha-1/CHRNA1 sub-subfamily. One of the alpha chains that assemble within the acetylcholine receptor, a pentamer of two alpha chains, a beta, a delta, and a gamma or epsilon chains.

The protein localises to the postsynaptic cell membrane. It localises to the cell membrane. It catalyses the reaction K(+)(in) = K(+)(out). The enzyme catalyses Na(+)(in) = Na(+)(out). Its function is as follows. Upon acetylcholine binding, the AChR responds by an extensive change in conformation that affects all subunits and leads to opening of an ion-conducting channel across the plasma membrane. This Electrophorus electricus (Electric eel) protein is Acetylcholine receptor subunit alpha (chrna1).